Consider the following 100-residue polypeptide: ATP-dependent Clp protease adapter protein ClpS (100 aa).

The protein belongs to the ClpS family. As to quaternary structure, binds to the N-terminal domain of the chaperone ClpA.

In terms of biological role, involved in the modulation of the specificity of the ClpAP-mediated ATP-dependent protein degradation. This Nitratidesulfovibrio vulgaris (strain DSM 19637 / Miyazaki F) (Desulfovibrio vulgaris) protein is ATP-dependent Clp protease adapter protein ClpS.